Consider the following 128-residue polypeptide: Flagellar hook-basal body complex protein FliE (128 aa).

The disordered stretch occupies residues 1–60; sequence MRPVASFRPPPTFSALQGGASSQATKTAGIDQRGTNQAFSLLDPQSTQSNSTDSSFGEMG. Residues 33 to 55 are compositionally biased toward polar residues; that stretch reads RGTNQAFSLLDPQSTQSNSTDSS.

It belongs to the FliE family.

Its subcellular location is the bacterial flagellum basal body. In Rhodopirellula baltica (strain DSM 10527 / NCIMB 13988 / SH1), this protein is Flagellar hook-basal body complex protein FliE.